Consider the following 136-residue polypeptide: Ribulose bisphosphate carboxylase small subunit, chloroplastic 1 (136 aa).

The N-terminal 13 residues, 1-13, are a transit peptide targeting the chloroplast; it reads NTDITSNGERVKC.

The protein belongs to the RuBisCO small chain family. As to quaternary structure, heterohexadecamer of 8 large and 8 small subunits.

The protein localises to the plastid. It localises to the chloroplast. In terms of biological role, ruBisCO catalyzes two reactions: the carboxylation of D-ribulose 1,5-bisphosphate, the primary event in carbon dioxide fixation, as well as the oxidative fragmentation of the pentose substrate. Both reactions occur simultaneously and in competition at the same active site. Although the small subunit is not catalytic it is essential for maximal activity. The protein is Ribulose bisphosphate carboxylase small subunit, chloroplastic 1 of Pisum sativum (Garden pea).